We begin with the raw amino-acid sequence, 401 residues long: Tumor necrosis factor receptor superfamily member 11B (401 aa).

The first 21 residues, Met1 to Gln21, serve as a signal peptide directing secretion. TNFR-Cys repeat units lie at residues Phe24–Cys62, Cys65–Cys105, Cys107–Cys142, and Cys145–Cys185. 8 cysteine pairs are disulfide-bonded: Cys41-Cys54, Cys44-Cys62, Cys65-Cys80, Cys83-Cys97, Cys87-Cys105, Cys107-Cys118, Cys124-Cys142, and Cys145-Cys160. N-linked (GlcNAc...) asparagine glycosylation occurs at Asn98. N-linked (GlcNAc...) asparagine glycosylation is found at Asn165 and Asn178. Cys166 and Cys185 are oxidised to a cystine. 2 consecutive Death domains span residues Asp198 to Lys269 and Ile270 to Leu365. Asn289 carries an N-linked (GlcNAc...) asparagine glycan.

As to quaternary structure, homodimer. Interacts with TNFSF10 and TNFSF11.

The protein localises to the secreted. In terms of biological role, acts as a decoy receptor for TNFSF11/RANKL and thereby neutralizes its function in osteoclastogenesis. Inhibits the activation of osteoclasts and promotes osteoclast apoptosis in vitro. Bone homeostasis seems to depend on the local ratio between TNFSF11 and TNFRSF11B. May also play a role in preventing arterial calcification. May act as decoy receptor for TNFSF10/TRAIL and protect against apoptosis. TNFSF10/TRAIL binding blocks the inhibition of osteoclastogenesis. This chain is Tumor necrosis factor receptor superfamily member 11B (Tnfrsf11b), found in Rattus norvegicus (Rat).